The sequence spans 393 residues: Riboflavin biosynthesis protein RibBA (393 aa).

The interval 1–200 is DHBP synthase; sequence MQFDTIELAI…IKSLVAFRKA (200 aa). Residues 27–28, Asp-32, 139–143, and Glu-163 contribute to the D-ribulose 5-phosphate site; these read RE and RNGHT. Glu-28 is a binding site for Mg(2+). His-142 is a binding site for Mg(2+). The GTP cyclohydrolase II stretch occupies residues 201 to 393; it reads VELNVNLKAK…TKKNKMGHLI (193 aa). 249–253 contributes to the GTP binding site; sequence RMHSA. Positions 254, 265, and 267 each coordinate Zn(2+). GTP-binding positions include Gln-270, 291 to 293, and Thr-313; that span reads EGR. Asp-325 acts as the Proton acceptor; for GTP cyclohydrolase activity in catalysis. The active-site Nucleophile; for GTP cyclohydrolase activity is the Arg-327. Residues Ser-348 and Lys-353 each coordinate GTP.

It in the N-terminal section; belongs to the DHBP synthase family. The protein in the C-terminal section; belongs to the GTP cyclohydrolase II family. Mg(2+) is required as a cofactor. Mn(2+) serves as cofactor. It depends on Zn(2+) as a cofactor.

The catalysed reaction is D-ribulose 5-phosphate = (2S)-2-hydroxy-3-oxobutyl phosphate + formate + H(+). It catalyses the reaction GTP + 4 H2O = 2,5-diamino-6-hydroxy-4-(5-phosphoribosylamino)-pyrimidine + formate + 2 phosphate + 3 H(+). It functions in the pathway cofactor biosynthesis; riboflavin biosynthesis; 2-hydroxy-3-oxobutyl phosphate from D-ribulose 5-phosphate: step 1/1. It participates in cofactor biosynthesis; riboflavin biosynthesis; 5-amino-6-(D-ribitylamino)uracil from GTP: step 1/4. Its function is as follows. Catalyzes the conversion of D-ribulose 5-phosphate to formate and 3,4-dihydroxy-2-butanone 4-phosphate. Catalyzes the conversion of GTP to 2,5-diamino-6-ribosylamino-4(3H)-pyrimidinone 5'-phosphate (DARP), formate and pyrophosphate. This is Riboflavin biosynthesis protein RibBA from Staphylococcus epidermidis (strain ATCC 35984 / DSM 28319 / BCRC 17069 / CCUG 31568 / BM 3577 / RP62A).